A 207-amino-acid chain; its full sequence is FMN-dependent NADH:quinone oxidoreductase 3 (207 aa).

FMN contacts are provided by residues Ser10 and 16-18 (SIS).

It belongs to the azoreductase type 1 family. As to quaternary structure, homodimer. Requires FMN as cofactor.

It catalyses the reaction 2 a quinone + NADH + H(+) = 2 a 1,4-benzosemiquinone + NAD(+). The enzyme catalyses N,N-dimethyl-1,4-phenylenediamine + anthranilate + 2 NAD(+) = 2-(4-dimethylaminophenyl)diazenylbenzoate + 2 NADH + 2 H(+). In terms of biological role, quinone reductase that provides resistance to thiol-specific stress caused by electrophilic quinones. Also exhibits azoreductase activity. Catalyzes the reductive cleavage of the azo bond in aromatic azo compounds to the corresponding amines. The protein is FMN-dependent NADH:quinone oxidoreductase 3 of Burkholderia lata (strain ATCC 17760 / DSM 23089 / LMG 22485 / NCIMB 9086 / R18194 / 383).